Here is a 97-residue protein sequence, read N- to C-terminus: Large ribosomal subunit protein bL27 (97 aa).

A propeptide spanning residues 1 to 12 is cleaved from the precursor; it reads MLKMNLANLQLF. Positions 14 to 38 are disordered; the sequence is HKKGGGSTSNGRDSESKRLGAKAAD.

Belongs to the bacterial ribosomal protein bL27 family. The N-terminus is cleaved by ribosomal processing cysteine protease Prp.

The protein is Large ribosomal subunit protein bL27 of Streptococcus mutans serotype c (strain ATCC 700610 / UA159).